The primary structure comprises 394 residues: Peroxisomal membrane protein PEX25 (394 aa).

A compositionally biased stretch (polar residues) spans 1-25 (MSQFGTTDIVSGSETPPYSGASYQD). Residues 1-65 (MSQFGTTDIV…SRSDDEDSQA (65 aa)) form a disordered region. Topologically, residues 1–366 (MSQFGTTDIV…LNLKTPKGTY (366 aa)) are cytoplasmic. A compositionally biased stretch (basic and acidic residues) spans 51 to 65 (SHTESSRSDDEDSQA). 3 positions are modified to phosphoserine: Ser-58, Ser-63, and Ser-289. A helical membrane pass occupies residues 367 to 383 (AVLSLGSGLTGLVKLWI). At 384 to 394 (TTKRSLCSSKD) the chain is on the lumenal side.

In terms of assembly, homooligomer. Interacts with PEX27 and PEX34.

The protein localises to the peroxisome membrane. In terms of biological role, required for regulation of peroxisome size and maintenance. Has a role in the import of peroxisomal matrix proteins. Imports RHO1 into the peroxisome. Also promotes peroxisome division and biogenesis. This chain is Peroxisomal membrane protein PEX25 (PEX25), found in Saccharomyces cerevisiae (strain ATCC 204508 / S288c) (Baker's yeast).